We begin with the raw amino-acid sequence, 514 residues long: Vacuolar aminopeptidase 1 (514 aa).

The propeptide at 1–45 (MEEQREILEQLKKTLQMLTVEPSKNNQIANEEKEKKENENSWCIL) is required for vacuolar localization. Mediates aggregation and vesicle formation in Cvt pathway. Residues Asn107 and Asn110 are each glycosylated (N-linked (GlcNAc...) asparagine). Zn(2+) is bound at residue His132. His210 serves as a coordination point for substrate. Zn(2+)-binding residues include Asp303, Glu339, and Glu340. Glu339 provides a ligand contact to substrate. The residue at position 356 (Ser356) is a Phosphoserine. Asp385 provides a ligand contact to Zn(2+). Substrate-binding residues include Asp385 and His388. The N-linked (GlcNAc...) asparagine glycan is linked to Asn448. Zn(2+) is bound at residue His479.

It belongs to the peptidase M18 family. Homododecamer. The precursor form of aminopeptidase 1 (prApe1) assembles into dodecamers and further aggregates into higher multimers (the Ape1 complex) in the cytoplasm. The Ape1 complex is disaggregated in the vacuolar lumen, but mature aminopeptidase 1 (mApe1) retains its dodecameric form. Dodecamer assembly in the cytoplasm is essential for formation of an enzymatically active complex. If cytoplasmic homododecamerization of prApe1 is disturbed in mutants, homododecamers of mApe1 will form in the vacuole, but they are enzymatically inactive. Interacts with ATG19. The cofactor is Zn(2+). Post-translationally, synthesized in a precursor form (prApe1) that has an amino-terminal propeptide. The N-terminal extension of the 61 kDa precursor is proteolytically processed in two sequential steps. The first step involves proteinase A (PrA/PEP4) and produces a 55 kDa unstable intermediate (iAPI). The second step involves proteinase B (PrB/PRB1) and converts iAPI into the 50 kDa stable, mature enzyme (mApe1).

It localises to the vacuole. It carries out the reaction Release of an N-terminal amino acid, preferably a neutral or hydrophobic one, from a polypeptide. Aminoacyl-arylamides are poor substrates.. With respect to regulation, strongly and specifically activated by Cl(-) and Br(-), which act as positive allosteric effectors. Inactivated by metal-chelating agents. Resident vacuolar enzyme that catalyzes the removal of amino acids from the N-terminus of peptides and proteins. Also acts as the major cargo protein of the cytoplasm-to-vacuole targeting (Cvt) pathway. The precursor form of aminopeptidase 1 (prApe1) assembles into dodecamers and the propeptide mediates the aggregation of dodecamers into higher multimers. The multimers are then recognized via the propeptide by their receptor ATG19, and ATG19 further interacts with ATG11, which tethers the APE1-ATG19 complex to the pre-autophagosomal structure (PAS). The cargo-receptor complex (also Cvt complex) is selectively enwrapped by a double-membrane structure termed the Cvt vesicle under vegetative growth conditions and by a similar but larger double-membrane structure termed the autophagosome under nitrogen starvation conditions. The Cvt vesicle or the autophagosome fuses with the vacuolar membrane and release its content in the vacuolar lumen. In the vacuole, prApe1 is processed into mature aminopeptidase 1 (mApe1). This is Vacuolar aminopeptidase 1 from Saccharomyces cerevisiae (strain ATCC 204508 / S288c) (Baker's yeast).